The following is a 235-amino-acid chain: tRNA (guanine-N(1)-)-methyltransferase (235 aa).

S-adenosyl-L-methionine contacts are provided by residues G114 and 134 to 139 (IGDYIL).

This sequence belongs to the RNA methyltransferase TrmD family. As to quaternary structure, homodimer.

It is found in the cytoplasm. The enzyme catalyses guanosine(37) in tRNA + S-adenosyl-L-methionine = N(1)-methylguanosine(37) in tRNA + S-adenosyl-L-homocysteine + H(+). Its function is as follows. Specifically methylates guanosine-37 in various tRNAs. The polypeptide is tRNA (guanine-N(1)-)-methyltransferase (Ehrlichia canis (strain Jake)).